A 1284-amino-acid polypeptide reads, in one-letter code: Integrator complex subunit 6 (1284 aa).

A VWFA domain is found at I3–G134. 4 disordered regions span residues D653 to N824, E864 to V895, T1053 to A1086, and N1125 to S1180. A compositionally biased stretch (gly residues) spans S690–G721. 2 stretches are compositionally biased toward low complexity: residues D752–S781 and N803–N824. Positions G879–G890 are enriched in polar residues. 2 stretches are compositionally biased toward low complexity: residues T1053–T1074 and N1125–N1141. The segment covering I1159–N1171 has biased composition (polar residues).

This sequence belongs to the Integrator subunit 6 family. As to quaternary structure, belongs to the multiprotein complex Integrator, at least composed of IntS1, IntS2, IntS3, IntS4, omd/IntS5, IntS6, defl/IntS7, IntS8, IntS9, IntS10, IntS11, IntS12, asun/IntS13, IntS14 and IntS15. The core complex associates with protein phosphatase 2A subunits mts/PP2A and Pp2A-29B, to form the Integrator-PP2A (INTAC) complex.

It localises to the nucleus. In terms of biological role, component of the integrator complex, a multiprotein complex that terminates RNA polymerase II (Pol II) transcription in the promoter-proximal region of genes. The integrator complex provides a quality checkpoint during transcription elongation by driving premature transcription termination of transcripts that are unfavorably configured for transcriptional elongation: the complex terminates transcription by (1) catalyzing dephosphorylation of the C-terminal domain (CTD) of Pol II subunit Polr2A/Rbp1 and Spt5, and (2) degrading the exiting nascent RNA transcript via endonuclease activity. The integrator complex is also involved in the 3'-end processing of the U7 snRNA, and also the spliceosomal snRNAs U1, U2, U4 and U5. Within the integrator complex, IntS6 acts as a substrate adapter for protein phosphatase 2A (PP2A). This chain is Integrator complex subunit 6, found in Drosophila melanogaster (Fruit fly).